Consider the following 426-residue polypeptide: Enolase (426 aa).

Q163 is a (2R)-2-phosphoglycerate binding site. E205 (proton donor) is an active-site residue. Positions 242, 285, and 312 each coordinate Mg(2+). Positions 337, 366, 367, and 388 each coordinate (2R)-2-phosphoglycerate. K337 functions as the Proton acceptor in the catalytic mechanism.

Belongs to the enolase family. It depends on Mg(2+) as a cofactor.

Its subcellular location is the cytoplasm. The protein resides in the secreted. It is found in the cell surface. The enzyme catalyses (2R)-2-phosphoglycerate = phosphoenolpyruvate + H2O. The protein operates within carbohydrate degradation; glycolysis; pyruvate from D-glyceraldehyde 3-phosphate: step 4/5. In terms of biological role, catalyzes the reversible conversion of 2-phosphoglycerate (2-PG) into phosphoenolpyruvate (PEP). It is essential for the degradation of carbohydrates via glycolysis. The polypeptide is Enolase (Gluconobacter oxydans (strain 621H) (Gluconobacter suboxydans)).